Consider the following 246-residue polypeptide: Enolase-phosphatase E1 (246 aa).

Residues Asp11 and Glu13 each coordinate Mg(2+). Residues 140–141 (SS) and Lys174 contribute to the substrate site. Residue Asp199 participates in Mg(2+) binding.

Belongs to the HAD-like hydrolase superfamily. MasA/MtnC family. Monomer. The cofactor is Mg(2+).

It is found in the cytoplasm. Its subcellular location is the nucleus. The catalysed reaction is 5-methylsulfanyl-2,3-dioxopentyl phosphate + H2O = 1,2-dihydroxy-5-(methylsulfanyl)pent-1-en-3-one + phosphate. The protein operates within amino-acid biosynthesis; L-methionine biosynthesis via salvage pathway; L-methionine from S-methyl-5-thio-alpha-D-ribose 1-phosphate: step 3/6. It functions in the pathway amino-acid biosynthesis; L-methionine biosynthesis via salvage pathway; L-methionine from S-methyl-5-thio-alpha-D-ribose 1-phosphate: step 4/6. Its function is as follows. Bifunctional enzyme that catalyzes the enolization of 2,3-diketo-5-methylthiopentyl-1-phosphate (DK-MTP-1-P) into the intermediate 2-hydroxy-3-keto-5-methylthiopentenyl-1-phosphate (HK-MTPenyl-1-P), which is then dephosphorylated to form the acireductone 1,2-dihydroxy-3-keto-5-methylthiopentene (DHK-MTPene). The polypeptide is Enolase-phosphatase E1 (Acyrthosiphon pisum (Pea aphid)).